We begin with the raw amino-acid sequence, 341 residues long: Glycerol-3-phosphate dehydrogenase [NAD(P)+] (341 aa).

NADPH is bound by residues serine 14, phenylalanine 15, arginine 35, and lysine 108. Sn-glycerol 3-phosphate-binding residues include lysine 108 and glycine 136. Alanine 140 serves as a coordination point for NADPH. Sn-glycerol 3-phosphate-binding residues include lysine 191, aspartate 244, serine 254, arginine 255, and asparagine 256. The Proton acceptor role is filled by lysine 191. Position 255 (arginine 255) interacts with NADPH. NADPH-binding residues include valine 279 and glutamate 281.

This sequence belongs to the NAD-dependent glycerol-3-phosphate dehydrogenase family.

The protein localises to the cytoplasm. The enzyme catalyses sn-glycerol 3-phosphate + NAD(+) = dihydroxyacetone phosphate + NADH + H(+). It carries out the reaction sn-glycerol 3-phosphate + NADP(+) = dihydroxyacetone phosphate + NADPH + H(+). It functions in the pathway membrane lipid metabolism; glycerophospholipid metabolism. In terms of biological role, catalyzes the reduction of the glycolytic intermediate dihydroxyacetone phosphate (DHAP) to sn-glycerol 3-phosphate (G3P), the key precursor for phospholipid synthesis. The polypeptide is Glycerol-3-phosphate dehydrogenase [NAD(P)+] (Pseudomonas savastanoi pv. phaseolicola (strain 1448A / Race 6) (Pseudomonas syringae pv. phaseolicola (strain 1448A / Race 6))).